We begin with the raw amino-acid sequence, 160 residues long: Cyanate hydratase (160 aa).

Catalysis depends on residues arginine 100, glutamate 103, and serine 126.

This sequence belongs to the cyanase family.

It catalyses the reaction cyanate + hydrogencarbonate + 3 H(+) = NH4(+) + 2 CO2. In terms of biological role, catalyzes the reaction of cyanate with bicarbonate to produce ammonia and carbon dioxide. The chain is Cyanate hydratase from Aspergillus oryzae (strain ATCC 42149 / RIB 40) (Yellow koji mold).